The primary structure comprises 308 residues: HPr kinase/phosphorylase (308 aa).

Catalysis depends on residues histidine 138 and lysine 159. An ATP-binding site is contributed by 153–160; the sequence is GESGLGKS. Serine 160 contributes to the Mg(2+) binding site. Catalysis depends on aspartate 177, which acts as the Proton acceptor; for phosphorylation activity. Proton donor; for dephosphorylation activity. The tract at residues 201 to 210 is important for the catalytic mechanism of both phosphorylation and dephosphorylation; it reads LEVRGLGLLD. Glutamate 202 provides a ligand contact to Mg(2+). Arginine 243 is a catalytic residue. An important for the catalytic mechanism of dephosphorylation region spans residues 264–269; that stretch reads QVAAGR.

It belongs to the HPrK/P family. As to quaternary structure, homohexamer. The cofactor is Mg(2+).

It catalyses the reaction [HPr protein]-L-serine + ATP = [HPr protein]-O-phospho-L-serine + ADP + H(+). The catalysed reaction is [HPr protein]-O-phospho-L-serine + phosphate + H(+) = [HPr protein]-L-serine + diphosphate. In terms of biological role, catalyzes the ATP- as well as the pyrophosphate-dependent phosphorylation of a specific serine residue in HPr, a phosphocarrier protein of the phosphoenolpyruvate-dependent sugar phosphotransferase system (PTS). HprK/P also catalyzes the pyrophosphate-producing, inorganic phosphate-dependent dephosphorylation (phosphorolysis) of seryl-phosphorylated HPr (P-Ser-HPr). In Bordetella pertussis (strain Tohama I / ATCC BAA-589 / NCTC 13251), this protein is HPr kinase/phosphorylase.